Consider the following 192-residue polypeptide: E3 ubiquitin-protein ligase RNF183 (192 aa).

Over Met1–Arg161 the chain is Cytoplasmic. The segment at Cys13–Arg60 adopts an RING-type zinc-finger fold. The helical; Anchor for type IV membrane protein transmembrane segment at Ile162–Phe182 threads the bilayer. Topologically, residues Trp183 to Gly192 are lumenal.

As to quaternary structure, interacts with FATE1. Interacts with SEC16A. Interacts with BCL2L1. Autoubiquitinated (in vitro). Kidney and testis.

It is found in the endoplasmic reticulum membrane. It localises to the endoplasmic reticulum. Its subcellular location is the golgi apparatus. The protein resides in the cis-Golgi network membrane. The protein localises to the lysosome membrane. It carries out the reaction S-ubiquitinyl-[E2 ubiquitin-conjugating enzyme]-L-cysteine + [acceptor protein]-L-lysine = [E2 ubiquitin-conjugating enzyme]-L-cysteine + N(6)-ubiquitinyl-[acceptor protein]-L-lysine.. It functions in the pathway protein modification; protein ubiquitination. Acts as an E3 ubiquitin ligase catalyzing the covalent attachment of ubiquitin moieties onto substrate proteins. Triggers apoptosis in response to prolonged ER stress by mediating the polyubiquitination and subsequent proteasomal degradation of BCL2L1. May collaborate with FATE1 to restrain BIK protein levels thus regulating apoptotic signaling. The sequence is that of E3 ubiquitin-protein ligase RNF183 (RNF183) from Homo sapiens (Human).